The primary structure comprises 241 residues: MEEDWEQLSEQEKVPIPAKKPDVNKWDGEDEEEEVKDSWEDEDELEEKKDEEKVETPKAKPKKTLQQKIADKEKLKQEEAERRRLEKEEEDMTPEQKLAEKLRLQKLQEESDLKNALDTFGVTSIVGGIDGMHPTNKEEFIELSDAICKKLSNYKNDTEYCAFLEDLVTKLFASLPSANIRKVKGILDNLYLEKQKLEKGDKPKKKAGGKIKARLRMDGENQNFDEYAPKYDDFDEYDDFM.

The disordered stretch occupies residues 1 to 97; it reads MEEDWEQLSE…EEEDMTPEQK (97 aa). A compositionally biased stretch (acidic residues) spans 28–45; the sequence is GEDEEEEVKDSWEDEDEL. Residues 31–119 are a coiled coil; sequence EEEEVKDSWE…ESDLKNALDT (89 aa). Composition is skewed to basic and acidic residues over residues 46–58 and 69–87; these read EEKKDEEKVETPK and IADKEKLKQEEAERRRLEK.

The protein belongs to the eIF-3 subunit J family. As to quaternary structure, component of the eukaryotic translation initiation factor 3 (eIF-3) complex.

It localises to the cytoplasm. Its function is as follows. Component of the eukaryotic translation initiation factor 3 (eIF-3) complex, which is involved in protein synthesis of a specialized repertoire of mRNAs and, together with other initiation factors, stimulates binding of mRNA and methionyl-tRNAi to the 40S ribosome. The eIF-3 complex specifically targets and initiates translation of a subset of mRNAs involved in cell proliferation. This is Eukaryotic translation initiation factor 3 subunit J from Aedes aegypti (Yellowfever mosquito).